The primary structure comprises 307 residues: Sesquiterpene synthase-like protein Agr10 (307 aa).

The segment at 287–307 (GRYFGDRGPENQSDIPTSSNR) is disordered. The segment covering 296 to 307 (ENQSDIPTSSNR) has biased composition (polar residues).

Belongs to the terpene synthase family.

The polypeptide is Sesquiterpene synthase-like protein Agr10 (Cyclocybe aegerita (Black poplar mushroom)).